We begin with the raw amino-acid sequence, 733 residues long: Phosphoribosylformylglycinamidine synthase subunit PurL (733 aa).

The active site involves histidine 41. Positions 44 and 83 each coordinate ATP. Glutamate 85 lines the Mg(2+) pocket. Residues 86 to 89 (SHNH) and arginine 108 contribute to the substrate site. Residue histidine 87 is the Proton acceptor of the active site. Aspartate 109 contacts Mg(2+). Residues 212-232 (GASFASQELSEESEEKRPSVQ) form a disordered region. Substrate is bound at residue glutamine 232. A Mg(2+)-binding site is contributed by aspartate 260. 304 to 306 (ESQ) is a binding site for substrate. 2 residues coordinate ATP: aspartate 488 and glycine 525. Residue asparagine 526 participates in Mg(2+) binding. Serine 528 serves as a coordination point for substrate.

The protein belongs to the FGAMS family. In terms of assembly, monomer. Part of the FGAM synthase complex composed of 1 PurL, 1 PurQ and 2 PurS subunits.

Its subcellular location is the cytoplasm. The catalysed reaction is N(2)-formyl-N(1)-(5-phospho-beta-D-ribosyl)glycinamide + L-glutamine + ATP + H2O = 2-formamido-N(1)-(5-O-phospho-beta-D-ribosyl)acetamidine + L-glutamate + ADP + phosphate + H(+). The protein operates within purine metabolism; IMP biosynthesis via de novo pathway; 5-amino-1-(5-phospho-D-ribosyl)imidazole from N(2)-formyl-N(1)-(5-phospho-D-ribosyl)glycinamide: step 1/2. Functionally, part of the phosphoribosylformylglycinamidine synthase complex involved in the purines biosynthetic pathway. Catalyzes the ATP-dependent conversion of formylglycinamide ribonucleotide (FGAR) and glutamine to yield formylglycinamidine ribonucleotide (FGAM) and glutamate. The FGAM synthase complex is composed of three subunits. PurQ produces an ammonia molecule by converting glutamine to glutamate. PurL transfers the ammonia molecule to FGAR to form FGAM in an ATP-dependent manner. PurS interacts with PurQ and PurL and is thought to assist in the transfer of the ammonia molecule from PurQ to PurL. The polypeptide is Phosphoribosylformylglycinamidine synthase subunit PurL (Thermoanaerobacter pseudethanolicus (strain ATCC 33223 / 39E) (Clostridium thermohydrosulfuricum)).